We begin with the raw amino-acid sequence, 320 residues long: GPI-specific phospholipase A2-like PGAP3 (320 aa).

The first 20 residues, M1 to G20, serve as a signal peptide directing secretion. The Lumenal portion of the chain corresponds to S21 to R98. N40 carries an N-linked (GlcNAc...) asparagine glycan. A helical membrane pass occupies residues F99–L119. The Cytoplasmic segment spans residues V120 to M135. Residues Y136 to F156 form a helical membrane-spanning segment. Over H157 to Y169 the chain is Lumenal. Residues F170–L190 form a helical membrane-spanning segment. The Cytoplasmic segment spans residues Q191–P193. A helical transmembrane segment spans residues A194 to L214. Over S215–N224 the chain is Lumenal. Residues L225 to W245 traverse the membrane as a helical segment. The Cytoplasmic portion of the chain corresponds to N246 to V257. The chain crosses the membrane as a helical span at residues V258–F278. Position 279 (W279) is a topological domain, lumenal. Residues V280 to F299 traverse the membrane as a helical segment. Residues S300–D320 lie on the Cytoplasmic side of the membrane.

The protein belongs to the PGAP3 family. Ubiquitously expressed, with highest levels in thyroid and placenta.

Its subcellular location is the golgi apparatus membrane. In terms of biological role, involved in the fatty acid remodeling steps of GPI-anchor maturation where the unsaturated acyl chain at sn-2 of inositol phosphate is replaced by a saturated stearoyl chain. May catalyze the first step of the fatty acid remodeling, by removing the unsaturated acyl chain at sn-2 of inositol phosphate, generating a lyso-GPI intermediate. The fatty acid remodeling steps is critical for the integration of GPI-APs into lipid rafts. The polypeptide is GPI-specific phospholipase A2-like PGAP3 (Homo sapiens (Human)).